Consider the following 437-residue polypeptide: Glutamate-1-semialdehyde 2,1-aminomutase (437 aa).

An N6-(pyridoxal phosphate)lysine modification is found at Lys274.

This sequence belongs to the class-III pyridoxal-phosphate-dependent aminotransferase family. HemL subfamily. As to quaternary structure, homodimer. The cofactor is pyridoxal 5'-phosphate.

It localises to the cytoplasm. The catalysed reaction is (S)-4-amino-5-oxopentanoate = 5-aminolevulinate. It participates in porphyrin-containing compound metabolism; protoporphyrin-IX biosynthesis; 5-aminolevulinate from L-glutamyl-tRNA(Glu): step 2/2. In Verminephrobacter eiseniae (strain EF01-2), this protein is Glutamate-1-semialdehyde 2,1-aminomutase.